Consider the following 322-residue polypeptide: Serine protease 38 (322 aa).

The first 28 residues, 1–28 (MAALTSGLGVLGYLLFPLLLASPTWVTS), serve as a signal peptide directing secretion. The propeptide at 29–55 (VSRRHPKSQANSLSGDVACGQPVLQGK) is activation peptide. One can recognise a Peptidase S1 domain in the interval 56–289 (LLGGEFARDR…FLSWIRYHLQ (234 aa)). C81 and C97 are oxidised to a cystine. Active-site charge relay system residues include H96 and D146. A glycan (N-linked (GlcNAc...) asparagine) is linked at N176. Cystine bridges form between C179-C247, C210-C226, and C237-C265. S241 serves as the catalytic Charge relay system. N250 and N276 each carry an N-linked (GlcNAc...) asparagine glycan.

The protein belongs to the peptidase S1 family.

It is found in the secreted. The chain is Serine protease 38 (Prss38) from Mus musculus (Mouse).